Reading from the N-terminus, the 322-residue chain is Ubiquitin-conjugating enzyme E2 U (322 aa).

Positions 4 to 153 (RAYLLLQRDF…LKLFNRPLQM (150 aa)) constitute a UBC core domain. C89 functions as the Glycyl thioester intermediate in the catalytic mechanism.

Belongs to the ubiquitin-conjugating enzyme family. Post-translationally, autoubiquitinated in vitro in the presence of UBR5.

The enzyme catalyses S-ubiquitinyl-[E1 ubiquitin-activating enzyme]-L-cysteine + [E2 ubiquitin-conjugating enzyme]-L-cysteine = [E1 ubiquitin-activating enzyme]-L-cysteine + S-ubiquitinyl-[E2 ubiquitin-conjugating enzyme]-L-cysteine.. It functions in the pathway protein modification; protein ubiquitination. Functionally, catalyzes the covalent attachment of ubiquitin to other proteins. This Macaca fascicularis (Crab-eating macaque) protein is Ubiquitin-conjugating enzyme E2 U (UBE2U).